A 336-amino-acid chain; its full sequence is Putative transcription factor avaE (336 aa).

The segment at residues 32–100 (TATRLNQTTF…VPLDQNESMP (69 aa)) is a DNA-binding region (WRKY).

The protein localises to the nucleus. Its pathway is secondary metabolite biosynthesis. In terms of biological role, putative transcription factor; part of the cluster that mediates the biosynthesis of a highly modified cyclo-arginine-tryptophan dipeptide (cRW). The chain is Putative transcription factor avaE from Aspergillus versicolor.